The chain runs to 159 residues: Phosphopantetheine adenylyltransferase (159 aa).

Thr10 is a binding site for substrate. ATP-binding positions include 10-11 (TF) and His18. Substrate-binding residues include Lys42, Met74, and Arg88. ATP contacts are provided by residues 89–91 (GLR), Glu99, and 124–130 (WSFISSS).

Belongs to the bacterial CoaD family. In terms of assembly, homohexamer. Mg(2+) serves as cofactor.

Its subcellular location is the cytoplasm. It catalyses the reaction (R)-4'-phosphopantetheine + ATP + H(+) = 3'-dephospho-CoA + diphosphate. The protein operates within cofactor biosynthesis; coenzyme A biosynthesis; CoA from (R)-pantothenate: step 4/5. Functionally, reversibly transfers an adenylyl group from ATP to 4'-phosphopantetheine, yielding dephospho-CoA (dPCoA) and pyrophosphate. This Pectobacterium carotovorum subsp. carotovorum (strain PC1) protein is Phosphopantetheine adenylyltransferase.